A 536-amino-acid chain; its full sequence is Formate--tetrahydrofolate ligase (536 aa).

51-58 (TAAGEGKT) serves as a coordination point for ATP.

Belongs to the formate--tetrahydrofolate ligase family.

It catalyses the reaction (6S)-5,6,7,8-tetrahydrofolate + formate + ATP = (6R)-10-formyltetrahydrofolate + ADP + phosphate. It participates in one-carbon metabolism; tetrahydrofolate interconversion. This is Formate--tetrahydrofolate ligase from Thermoplasma volcanium (strain ATCC 51530 / DSM 4299 / JCM 9571 / NBRC 15438 / GSS1).